The following is a 577-amino-acid chain: Efflux pump notK' (577 aa).

2 N-linked (GlcNAc...) asparagine glycosylation sites follow: N62 and N84. A run of 5 helical transmembrane segments spans residues 104 to 124, 151 to 171, 189 to 209, 241 to 261, and 265 to 285; these read AAIA…PVAL, LAVT…MLGI, AGIG…LGLV, NPTM…LMMY, and GAVI…TTPV. The N-linked (GlcNAc...) asparagine glycan is linked to N320. A run of 5 helical transmembrane segments spans residues 328 to 348, 373 to 393, 413 to 433, 434 to 454, and 476 to 496; these read FGLA…GTLY, VDAI…TAFV, GICF…PPWA, TGST…EINW, and IADG…GVWV. Residues 555 to 566 are compositionally biased toward low complexity; it reads MPPNGSMSSGSP. The tract at residues 555 to 577 is disordered; it reads MPPNGSMSSGSPEQVAEKAVGKY. N558 is a glycosylation site (N-linked (GlcNAc...) asparagine).

It belongs to the nucleobase:cation symporter-2 (NCS2) (TC 2.A.40) family. Azg-like subfamily.

Its subcellular location is the cell membrane. Functionally, efflux pump; part of the gene cluster that mediates the biosynthesis of notoamide, a fungal indole alkaloid that belongs to a family of natural products containing a characteristic bicyclo[2.2.2]diazaoctane core. This Aspergillus versicolor protein is Efflux pump notK'.